Reading from the N-terminus, the 301-residue chain is HTH-type transcriptional regulator MtrA (301 aa).

Positions 196-297 (KRLGHLIQKV…HVSPGQYRKE (102 aa)) constitute an HTH araC/xylS-type domain. DNA-binding regions (H-T-H motif) lie at residues 216–237 (DKMVAAANMSRAQLMRRFKSQV) and 264–287 (VLEVALSVGFQSETHFGKAFKRQY).

With respect to regulation, the affinity for the mtrCDE promoter increases 2-fold in the presence of TX-100, a known effector and substrate of the MtrCDE pump. Involved in the induction of the mtrCDE-encoded efflux pump. Binds specifically to the mtrCDE promoter region. Required for high-level inducible resistance to the detergent Triton X-100 (TX-100) and the spermicide nonoxynol-9 (N-9). This chain is HTH-type transcriptional regulator MtrA, found in Neisseria gonorrhoeae.